The primary structure comprises 149 residues: Endonuclease I (149 aa).

Homodimer.

The catalysed reaction is Endonucleolytic cleavage to 5'-phosphooligonucleotide end-products.. Functionally, junction-resolving enzyme that selectively binds and cleaves four-way (Holliday) DNA junctions present after viral genomic replication. These intermediates are created during DNA repair, processing of stalled replication forks and homologous genetic recombination. Introduces two nicks on the two non-crossing strands, at 5' sides of the junction. Also participates together with gp6 in the degradation of host chromosome to provide nucleotides for phage DNA synthesis. The protein is Endonuclease I of Escherichia coli (Bacteriophage T7).